A 566-amino-acid chain; its full sequence is Urease subunit alpha (566 aa).

The Urease domain maps to 128–566 (GGIDSHVHFI…LPMAQRYFLF (439 aa)). Residues histidine 133, histidine 135, and lysine 216 each coordinate Ni(2+). Residue lysine 216 is modified to N6-carboxylysine. Histidine 218 is a substrate binding site. Residues histidine 245 and histidine 271 each contribute to the Ni(2+) site. Histidine 319 serves as the catalytic Proton donor. Residue aspartate 359 participates in Ni(2+) binding.

This sequence belongs to the metallo-dependent hydrolases superfamily. Urease alpha subunit family. Heterotrimer of UreA (gamma), UreB (beta) and UreC (alpha) subunits. Three heterotrimers associate to form the active enzyme. It depends on Ni cation as a cofactor. In terms of processing, carboxylation allows a single lysine to coordinate two nickel ions.

It is found in the cytoplasm. The enzyme catalyses urea + 2 H2O + H(+) = hydrogencarbonate + 2 NH4(+). Its pathway is nitrogen metabolism; urea degradation; CO(2) and NH(3) from urea (urease route): step 1/1. The protein is Urease subunit alpha of Nitrosococcus oceani (strain ATCC 19707 / BCRC 17464 / JCM 30415 / NCIMB 11848 / C-107).